A 338-amino-acid chain; its full sequence is Fructose-1,6-bisphosphatase class 1 (338 aa).

Mg(2+) contacts are provided by E92, D114, L116, and D117. Residues 117 to 120 (DGSS), N210, Y243, and K276 each bind substrate. E282 is a Mg(2+) binding site.

The protein belongs to the FBPase class 1 family. As to quaternary structure, homotetramer. The cofactor is Mg(2+).

The protein resides in the cytoplasm. The catalysed reaction is beta-D-fructose 1,6-bisphosphate + H2O = beta-D-fructose 6-phosphate + phosphate. Its pathway is carbohydrate biosynthesis; gluconeogenesis. The sequence is that of Fructose-1,6-bisphosphatase class 1 from Maridesulfovibrio salexigens (strain ATCC 14822 / DSM 2638 / NCIMB 8403 / VKM B-1763) (Desulfovibrio salexigens).